We begin with the raw amino-acid sequence, 214 residues long: MVKVSAENFLYFAISVLVNLLFLKILYIYLFLPNISPPQAFTPLSVKIEEIKAPPKKPGKPQKKVVKKKPEAVSVSQAPEKGDVPVEVKEEKEVSLLPELEKKIKERLKKRKEVKQIGEISAVVSKQKVEIRLGSRKLVHVPPPPVFHVKEYPSLVRIKIWVNPEGRVIRAIIIQRSGVTEVDEGLLRFTKKLKFEPIEVPEVQEGVITFTFST.

The chain crosses the membrane as a helical span at residues phenylalanine 9–phenylalanine 31. The disordered stretch occupies residues alanine 53–serine 74. The span at proline 54 to lysine 67 shows a compositional bias: basic residues.

The protein resides in the membrane. This is an uncharacterized protein from Aquifex aeolicus (strain VF5).